We begin with the raw amino-acid sequence, 433 residues long: Small ribosomal subunit biogenesis GTPase RsgA 1, mitochondrial (433 aa).

The tract at residues 1–20 is disordered; the sequence is MLRAKHIGKNYSSSLSPVLS. Residues 113-291 enclose the CP-type G domain; sequence SEILDPPVAN…LADTPGFNQP (179 aa). 212 to 220 contacts GTP; the sequence is GPSGVGKSS. Zn(2+) contacts are provided by Cys-317, Cys-322, His-324, and Cys-330.

This sequence belongs to the TRAFAC class YlqF/YawG GTPase family. RsgA subfamily. Monomer. Associates with 30S ribosomal subunit, binds 16S rRNA. The cofactor is Zn(2+).

It is found in the mitochondrion. One of several proteins that assist in the late maturation steps of the functional core of the 30S ribosomal subunit. Helps release RbfA from mature subunits. May play a role in the assembly of ribosomal proteins into the subunit. Circularly permuted GTPase that catalyzes slow GTP hydrolysis, GTPase activity is stimulated by the 30S ribosomal subunit. Required for embryo development. This Arabidopsis thaliana (Mouse-ear cress) protein is Small ribosomal subunit biogenesis GTPase RsgA 1, mitochondrial.